The sequence spans 197 residues: Segregation and condensation protein B (197 aa).

It belongs to the ScpB family. As to quaternary structure, homodimer. Homodimerization may be required to stabilize the binding of ScpA to the Smc head domains. Component of a cohesin-like complex composed of ScpA, ScpB and the Smc homodimer, in which ScpA and ScpB bind to the head domain of Smc. The presence of the three proteins is required for the association of the complex with DNA.

The protein localises to the cytoplasm. Participates in chromosomal partition during cell division. May act via the formation of a condensin-like complex containing Smc and ScpA that pull DNA away from mid-cell into both cell halves. This chain is Segregation and condensation protein B, found in Malacoplasma penetrans (strain HF-2) (Mycoplasma penetrans).